The primary structure comprises 284 residues: P2R1A-PPP2R2A-interacting phosphatase regulator 1 (284 aa).

Positions 1–65 (MAQEKMELDL…RRNSTTFPSR (65 aa)) are disordered. The segment covering 20-29 (EGGGPGGGGL) has biased composition (gly residues). S32 bears the Phosphoserine mark. At S34 the chain carries Phosphoserine; by CHEK1. S42, S45, S59, and S73 each carry phosphoserine. A Glycyl lysine isopeptide (Lys-Gly) (interchain with G-Cter in SUMO1) cross-link involves residue K86. Phosphoserine occurs at positions 140 and 144. T146 is modified (phosphothreonine). The segment at 164-185 (SNGLPPSPIPSPTTRFTTRRSQ) is disordered. The span at 175–185 (PTTRFTTRRSQ) shows a compositional bias: low complexity. 2 positions are modified to phosphoserine: S184 and S186. The tract at residues 233 to 284 (GVCVSSDTLDGNSSSAGSSCNSPAKVSTTTDSPVSPAQAASPFIPVDELSSK) is disordered. Residues 243–254 (GNSSSAGSSCNS) show a composition bias toward low complexity. Residues 256 to 267 (AKVSTTTDSPVS) are compositionally biased toward polar residues. Phosphoserine occurs at positions 264, 267, and 273.

The protein belongs to the FAM122 family. Interacts with PPP2CA and PPP2R1A. Interacts (via its N-terminus) with PPP2R2A; the interaction is direct and this interaction inhibits PP2A activity. The CHEK1-mediated Ser-34 phosphorylated form interacts with 14-3-3 proteins. CHEK1-mediated phosphorylation at Ser-34 negatively regulates its ability to inhibit serine/threonine-protein phosphatase 2A (PP2A) activity. Phosphorylation leads to its release from the PP2A complex and its sequestration by 14-3-3 proteins in the cytoplasm resulting in its inability to translocate to the nucleus, where it otherwise inhibits PP2A.

The protein localises to the nucleus. The protein resides in the cytoplasm. Acts as an inhibitor of serine/threonine-protein phosphatase 2A (PP2A) activity. Inhibits PP2A activity by blocking the substrate binding site on PPP2R2A and the active site of PPP2CA. Potentiates ubiquitin-mediated proteasomal degradation of serine/threonine-protein phosphatase 2A catalytic subunit alpha (PPP2CA). Inhibits PP2A-mediated dephosphorylation of WEE1, promoting ubiquitin-mediated proteolysis of WEE1, thereby releasing G2/M checkpoint. The sequence is that of P2R1A-PPP2R2A-interacting phosphatase regulator 1 from Mus musculus (Mouse).